The chain runs to 248 residues: Exosome complex component Rrp41 (248 aa).

Belongs to the RNase PH family. Rrp41 subfamily. In terms of assembly, component of the archaeal exosome complex. Forms a hexameric ring-like arrangement composed of 3 Rrp41-Rrp42 heterodimers. The hexameric ring associates with a trimer of Rrp4 and/or Csl4 subunits.

Its subcellular location is the cytoplasm. Catalytic component of the exosome, which is a complex involved in RNA degradation. Has 3'-&gt;5' exoribonuclease activity. Can also synthesize heteromeric RNA-tails. Binds RNA. This Saccharolobus solfataricus (strain ATCC 35092 / DSM 1617 / JCM 11322 / P2) (Sulfolobus solfataricus) protein is Exosome complex component Rrp41.